We begin with the raw amino-acid sequence, 292 residues long: MPSSHPLPPPELRDCPAPAKLNLFLHVTGRRADGYHTLQTVFQLVDWCDMLHFRRRDDGVVARVTEVPGVPAESDLVVRAARALQAATGTTFGAEIAIDKVLPMGGGIGGGSSDAATTLLALNHLWGLGLTRPELMRIGLTLGADVPVFVLGQNAFAQGIGEELTPVELPDSWFVIIHPKQHVPTAEIFSDECLTRDTPVSIIAVFAARTNKFDFGRNDLEPIATAKFGEVARALAWLKQHNQHARMTGSGACVFARFPDAKTAQQVLERLPPEWDGRCVRSLAHHPLAAFA.

Lys-20 is a catalytic residue. 103–113 is a binding site for ATP; it reads PMGGGIGGGSS. The active site involves Asp-145.

It belongs to the GHMP kinase family. IspE subfamily.

The catalysed reaction is 4-CDP-2-C-methyl-D-erythritol + ATP = 4-CDP-2-C-methyl-D-erythritol 2-phosphate + ADP + H(+). It participates in isoprenoid biosynthesis; isopentenyl diphosphate biosynthesis via DXP pathway; isopentenyl diphosphate from 1-deoxy-D-xylulose 5-phosphate: step 3/6. In terms of biological role, catalyzes the phosphorylation of the position 2 hydroxy group of 4-diphosphocytidyl-2C-methyl-D-erythritol. The chain is 4-diphosphocytidyl-2-C-methyl-D-erythritol kinase from Cupriavidus taiwanensis (strain DSM 17343 / BCRC 17206 / CCUG 44338 / CIP 107171 / LMG 19424 / R1) (Ralstonia taiwanensis (strain LMG 19424)).